A 125-amino-acid chain; its full sequence is uncharacterized protein (125 aa).

The segment at 50-73 is disordered; sequence QTSDFSDESSRSDSSSVTNENEVS.

This is an uncharacterized protein from Microplitis demolitor (Parasitoid wasp).